The primary structure comprises 248 residues: MSFVVIIPARFSSTRLPGKPLLDINGKPMIVHVLERARESGAERIIVATDHEDVARAVEAAGGEVCITRADHQSGTERLAEVVEKCGFSDDTVIVNVQGDEPMIPAVIIRQVAENLAQRQVGMATLAAPIHSAEEAFNPNAVKVVLDAEGYALYFSRATIPWDRDRFAKSLETVGDTCLRHLGIYGYRAGFIRRYVSWQPSPLEQIEMLEQLRVLWYGEKIHVAVAKAVPGTGVDTADDLERVRAEMR.

It belongs to the KdsB family.

Its subcellular location is the cytoplasm. The catalysed reaction is 3-deoxy-alpha-D-manno-oct-2-ulosonate + CTP = CMP-3-deoxy-beta-D-manno-octulosonate + diphosphate. It functions in the pathway nucleotide-sugar biosynthesis; CMP-3-deoxy-D-manno-octulosonate biosynthesis; CMP-3-deoxy-D-manno-octulosonate from 3-deoxy-D-manno-octulosonate and CTP: step 1/1. The protein operates within bacterial outer membrane biogenesis; lipopolysaccharide biosynthesis. Its function is as follows. Activates KDO (a required 8-carbon sugar) for incorporation into bacterial lipopolysaccharide in Gram-negative bacteria. This chain is 3-deoxy-manno-octulosonate cytidylyltransferase, found in Salmonella arizonae (strain ATCC BAA-731 / CDC346-86 / RSK2980).